Consider the following 295-residue polypeptide: Bifunctional protein FolD (295 aa).

NADP(+)-binding positions include 166-168, Ser-195, and Ile-236; that span reads GRS.

It belongs to the tetrahydrofolate dehydrogenase/cyclohydrolase family. Homodimer.

The enzyme catalyses (6R)-5,10-methylene-5,6,7,8-tetrahydrofolate + NADP(+) = (6R)-5,10-methenyltetrahydrofolate + NADPH. The catalysed reaction is (6R)-5,10-methenyltetrahydrofolate + H2O = (6R)-10-formyltetrahydrofolate + H(+). Its pathway is one-carbon metabolism; tetrahydrofolate interconversion. In terms of biological role, catalyzes the oxidation of 5,10-methylenetetrahydrofolate to 5,10-methenyltetrahydrofolate and then the hydrolysis of 5,10-methenyltetrahydrofolate to 10-formyltetrahydrofolate. In Chlorobium luteolum (strain DSM 273 / BCRC 81028 / 2530) (Pelodictyon luteolum), this protein is Bifunctional protein FolD.